The chain runs to 176 residues: Membrane-anchored junction protein (176 aa).

Residues 1–151 (MSLKPFTYPF…QHNSPPPKER (151 aa)) are Nuclear-facing. The disordered stretch occupies residues 59–150 (AVMRKRKHMD…LQHNSPPPKE (92 aa)). Over residues 95-107 (PPVETRRNRERKT) the composition is skewed to basic and acidic residues. Residues 108–120 (QQGLQETLASDIT) are compositionally biased toward polar residues. Residues 152–170 (AATGFFGFLSSLFPFRYFF) form a helical membrane-spanning segment. Residues 171–176 (RKSSHS) lie on the Perinuclear space side of the membrane.

It belongs to the MAJIN family. Component of the MAJIN-TERB1-TERB2 complex, composed of MAJIN, TERB1 and TERB2.

Its subcellular location is the nucleus inner membrane. It is found in the chromosome. The protein resides in the telomere. In terms of biological role, meiosis-specific telomere-associated protein involved in meiotic telomere attachment to the nucleus inner membrane, a crucial step for homologous pairing and synapsis. Component of the MAJIN-TERB1-TERB2 complex, which promotes telomere cap exchange by mediating attachment of telomeric DNA to the inner nuclear membrane and replacement of the protective cap of telomeric chromosomes: in early meiosis, the MAJIN-TERB1-TERB2 complex associates with telomeric DNA and the shelterin/telosome complex. During prophase, the complex matures and promotes release of the shelterin/telosome complex from telomeric DNA. In the complex, MAJIN acts as the anchoring subunit to the nucleus inner membrane. MAJIN shows DNA-binding activity, possibly for the stabilization of telomere attachment on the nucleus inner membrane. The sequence is that of Membrane-anchored junction protein from Homo sapiens (Human).